The sequence spans 175 residues: Disulfide bond formation protein B (175 aa).

The Cytoplasmic segment spans residues 1 to 13 (MTAFTRFAHSRAS). A helical membrane pass occupies residues 14–30 (WLILTGSAIALEAAALY). Topologically, residues 31–48 (FQYVMKLDPCVMCIYQRL) are periplasmic. The cysteines at positions 40 and 43 are disulfide-linked. A helical transmembrane segment spans residues 49–64 (AVFGILAAGLIGMTAP). The Cytoplasmic portion of the chain corresponds to 65-71 (KYRIVRI). A helical membrane pass occupies residues 72-89 (LGALGWAVSATWGLKLAL). The Periplasmic segment spans residues 90-144 (ALVDMQNNPSPFSTCSFLPEFPAWMPLHEWFPSVMLPTGMCTDVPWQFMGVTMAE). A disulfide bridge connects residues C104 and C130. The chain crosses the membrane as a helical span at residues 145-163 (WMVVAFSGYLVALLLFIVP). At 164–175 (ILSGSNKPSLYK) the chain is on the cytoplasmic side.

Belongs to the DsbB family.

The protein resides in the cell inner membrane. Its function is as follows. Required for disulfide bond formation in some periplasmic proteins. Acts by oxidizing the DsbA protein. The polypeptide is Disulfide bond formation protein B (Shewanella sp. (strain MR-4)).